The sequence spans 183 residues: ATP synthase subunit delta (183 aa).

This sequence belongs to the ATPase delta chain family. As to quaternary structure, F-type ATPases have 2 components, F(1) - the catalytic core - and F(0) - the membrane proton channel. F(1) has five subunits: alpha(3), beta(3), gamma(1), delta(1), epsilon(1). F(0) has three main subunits: a(1), b(2) and c(10-14). The alpha and beta chains form an alternating ring which encloses part of the gamma chain. F(1) is attached to F(0) by a central stalk formed by the gamma and epsilon chains, while a peripheral stalk is formed by the delta and b chains.

It is found in the cell inner membrane. Its function is as follows. F(1)F(0) ATP synthase produces ATP from ADP in the presence of a proton or sodium gradient. F-type ATPases consist of two structural domains, F(1) containing the extramembraneous catalytic core and F(0) containing the membrane proton channel, linked together by a central stalk and a peripheral stalk. During catalysis, ATP synthesis in the catalytic domain of F(1) is coupled via a rotary mechanism of the central stalk subunits to proton translocation. This protein is part of the stalk that links CF(0) to CF(1). It either transmits conformational changes from CF(0) to CF(1) or is implicated in proton conduction. The polypeptide is ATP synthase subunit delta (Desulfovibrio desulfuricans (strain ATCC 27774 / DSM 6949 / MB)).